Consider the following 530-residue polypeptide: UDP-N-acetylmuramoyl-L-alanyl-D-glutamate--2,6-diaminopimelate ligase (530 aa).

S21 provides a ligand contact to UDP-N-acetyl-alpha-D-muramoyl-L-alanyl-D-glutamate. ATP is bound at residue 99–105 (GTNGKSS). Residues 145 to 146 (TT), S172, Q178, and R180 each bind UDP-N-acetyl-alpha-D-muramoyl-L-alanyl-D-glutamate. K212 is subject to N6-carboxylysine. The RPE1 insert domain occupies 221 to 269 (FKPAYREEFKGDTEHSTTAYILVREDASTGSTSKLLLEAKFGKMSTEYL). Meso-2,6-diaminopimelate is bound by residues R422, 446–449 (DNPR), G496, and E500. The Meso-diaminopimelate recognition motif motif lies at 446-449 (DNPR).

This sequence belongs to the MurCDEF family. MurE subfamily. Requires Mg(2+) as cofactor. Carboxylation is probably crucial for Mg(2+) binding and, consequently, for the gamma-phosphate positioning of ATP.

It is found in the cytoplasm. It catalyses the reaction UDP-N-acetyl-alpha-D-muramoyl-L-alanyl-D-glutamate + meso-2,6-diaminopimelate + ATP = UDP-N-acetyl-alpha-D-muramoyl-L-alanyl-gamma-D-glutamyl-meso-2,6-diaminopimelate + ADP + phosphate + H(+). Its pathway is cell wall biogenesis; peptidoglycan biosynthesis. In terms of biological role, catalyzes the addition of meso-diaminopimelic acid to the nucleotide precursor UDP-N-acetylmuramoyl-L-alanyl-D-glutamate (UMAG) in the biosynthesis of bacterial cell-wall peptidoglycan. The sequence is that of UDP-N-acetylmuramoyl-L-alanyl-D-glutamate--2,6-diaminopimelate ligase from Rickettsia felis (strain ATCC VR-1525 / URRWXCal2) (Rickettsia azadi).